Here is a 210-residue protein sequence, read N- to C-terminus: Histidine biosynthesis bifunctional protein HisIE (210 aa).

The interval 1–106 (MTKYKIDFSK…SCFNTEVPFS (106 aa)) is phosphoribosyl-AMP cyclohydrolase. Positions 107 to 210 (VQTLAQTVQD…KGERQNIEQW (104 aa)) are phosphoribosyl-ATP pyrophosphohydrolase.

The protein in the N-terminal section; belongs to the PRA-CH family. It in the C-terminal section; belongs to the PRA-PH family.

It localises to the cytoplasm. The enzyme catalyses 1-(5-phospho-beta-D-ribosyl)-ATP + H2O = 1-(5-phospho-beta-D-ribosyl)-5'-AMP + diphosphate + H(+). It catalyses the reaction 1-(5-phospho-beta-D-ribosyl)-5'-AMP + H2O = 1-(5-phospho-beta-D-ribosyl)-5-[(5-phospho-beta-D-ribosylamino)methylideneamino]imidazole-4-carboxamide. The protein operates within amino-acid biosynthesis; L-histidine biosynthesis; L-histidine from 5-phospho-alpha-D-ribose 1-diphosphate: step 2/9. It participates in amino-acid biosynthesis; L-histidine biosynthesis; L-histidine from 5-phospho-alpha-D-ribose 1-diphosphate: step 3/9. This Staphylococcus aureus (strain Mu50 / ATCC 700699) protein is Histidine biosynthesis bifunctional protein HisIE (hisI).